The chain runs to 313 residues: MTQWYPASPALWQGRDDSIEAPDARRLFQTVTRSETFSPENWQQKIALMGFACDEGVKRNAGRPGAAGAPDALRKALANMASHQGHERLVDLGNWVAPTPDLEGAQQALRDAVSRCLRAGMRTLVLGGGHETAFGHGAGVLDAFAQESVGIINLDAHLDLRQTDRATSGTPFRQLAQLCDAQSRAFHYACFGVSRAANTQALWREAQWRNVTVVEDLDCHDALAQMTQFIDKVDKIYLTIDLDVLPVWEMPAVSAPAALGVPLIQVLRLIEPVCRSGKLQAADLVEFNPRFDEDGAAARVAARLGWQIAHWWR.

The Mn(2+) site is built by histidine 130, aspartate 155, histidine 157, aspartate 159, aspartate 241, and aspartate 243.

The protein belongs to the arginase family. Mn(2+) serves as cofactor.

It carries out the reaction N-formimidoyl-L-glutamate + H2O = formamide + L-glutamate. It functions in the pathway amino-acid degradation; L-histidine degradation into L-glutamate; L-glutamate from N-formimidoyl-L-glutamate (hydrolase route): step 1/1. In terms of biological role, catalyzes the conversion of N-formimidoyl-L-glutamate to L-glutamate and formamide. In Salmonella enteritidis PT4 (strain P125109), this protein is Formimidoylglutamase.